The primary structure comprises 101 residues: Protein S100-A4 (101 aa).

Alanine 2 is subject to N-acetylalanine. Lysine 7 is modified (N6-acetyllysine). EF-hand domains follow at residues 12-47 (MVSTFHKYSGKEGDKFKLNKSELKELLTRELPSFLG) and 50-85 (TDEAAFQKLMSNLDSNRDNEVDFQEYCVFLSCIAMM). Residues lysine 28 and glutamate 33 each coordinate Ca(2+). N6-acetyllysine is present on lysine 35. Ca(2+)-binding residues include aspartate 63, asparagine 65, aspartate 67, glutamate 69, and glutamate 74.

This sequence belongs to the S-100 family. As to quaternary structure, homodimer. Interacts with PPFIBP1 in a calcium-dependent mode. Interacts with PGLYRP1; this complex acts as a chemoattractant that promotes lymphocyte movement. Interacts with MYH9; this interaction increases cell motility. Interacts with Annexin 2/ANXA2. Interacts with TP53; this interaction promotes TP53 degradation. Interacts with CCR5. Interacts with FCGR3A; this interaction inhibits PKC-dependent phosphorylation of FCGR3A. In terms of tissue distribution, ubiquitously expressed.

Its subcellular location is the secreted. It localises to the nucleus. The protein resides in the cytoplasm. Functionally, calcium-binding protein that plays a role in various cellular processes including motility, angiogenesis, cell differentiation, apoptosis, and autophagy. Increases cell motility and invasiveness by interacting with non-muscle myosin heavy chain (NMMHC) IIA/MYH9. Mechanistically, promotes filament depolymerization and increases the amount of soluble myosin-IIA, resulting in the formation of stable protrusions facilitating chemotaxis. Also modulates the pro-apoptotic function of TP53 by binding to its C-terminal transactivation domain within the nucleus and reducing its protein levels. Within the extracellular space, stimulates cytokine production including granulocyte colony-stimulating factor and CCL24 from T-lymphocytes. In addition, stimulates T-lymphocyte chemotaxis by acting as a chemoattractant complex with PGLYRP1 that promotes lymphocyte migration via CCR5 and CXCR3 receptors. The sequence is that of Protein S100-A4 (S100A4) from Homo sapiens (Human).